We begin with the raw amino-acid sequence, 25 residues long: Dermaseptin-DI5 (25 aa).

This sequence belongs to the frog skin active peptide (FSAP) family. Dermaseptin subfamily. As to expression, expressed by the skin glands.

Its subcellular location is the secreted. Antibacterial peptide with activity against Gram-positive bacteria S.aureus and E.faecalis, and Gram-negative bacteria P.aeruginosa and E.coli. This chain is Dermaseptin-DI5, found in Phyllomedusa distincta (Monkey frog).